Reading from the N-terminus, the 391-residue chain is Pectate lyase D (391 aa).

Positions 1–31 (MNNTRVSFRSTKSLLAAIIATSMMTWSVNRA) are cleaved as a signal peptide. The Ca(2+) site is built by D170 and D213. Residue R266 is part of the active site.

It belongs to the polysaccharide lyase 1 family. PLBC subfamily. Ca(2+) is required as a cofactor.

It is found in the secreted. The enzyme catalyses Eliminative cleavage of (1-&gt;4)-alpha-D-galacturonan to give oligosaccharides with 4-deoxy-alpha-D-galact-4-enuronosyl groups at their non-reducing ends.. It participates in glycan metabolism; pectin degradation; 2-dehydro-3-deoxy-D-gluconate from pectin: step 2/5. Functionally, involved in maceration and soft-rotting of plant tissue. This Dickeya chrysanthemi (Pectobacterium chrysanthemi) protein is Pectate lyase D (pelD).